We begin with the raw amino-acid sequence, 128 residues long: MRFAIVVTGPAYGTQQASSAFQFAQALIAEGHELSSVFFYREGVYNANQLTSPASDEFDLVRGWQQLNAQHGVALNICVAAALRRGVVDETEAGRLGLASSNLQPGFTLSGLGALAEASLTCDRVVQF.

The active-site Cysteine persulfide intermediate is the C78.

Belongs to the DsrE/TusD family. In terms of assembly, heterohexamer, formed by a dimer of trimers. The hexameric TusBCD complex contains 2 copies each of TusB, TusC and TusD. The TusBCD complex interacts with TusE.

It is found in the cytoplasm. Its function is as follows. Part of a sulfur-relay system required for 2-thiolation of 5-methylaminomethyl-2-thiouridine (mnm(5)s(2)U) at tRNA wobble positions. Accepts sulfur from TusA and transfers it in turn to TusE. The polypeptide is Sulfurtransferase TusD (Escherichia coli O127:H6 (strain E2348/69 / EPEC)).